The following is a 342-amino-acid chain: Protein-ribulosamine 3-kinase, chloroplastic (342 aa).

The N-terminal 46 residues, 1-46 (MANVALLSAASPSTSSAAPRLRHVARRRPSRRSACPRSAASRLSIM), are a transit peptide targeting the chloroplast. Position 141–143 (141–143 (EFI)) interacts with ATP. D246 acts as the Proton acceptor in catalysis.

It belongs to the fructosamine kinase family.

It localises to the plastid. Its subcellular location is the chloroplast. It catalyses the reaction N(6)-D-ribulosyl-L-lysyl-[protein] + ATP = N(6)-(3-O-phospho-D-ribulosyl)-L-lysyl-[protein] + ADP + H(+). The enzyme catalyses N(6)-(D-erythrulosyl)-L-lysyl-[protein] + ATP = N(6)-(3-O-phospho-D-erythrulosyl)-L-lysyl-[protein] + ADP + H(+). Initiates a process leading to the deglycation of proteins. Phosphorylates low-molecular-mass and protein-bound erythrulosamines and ribulosamines, but not fructosamines or psicosamines, on the third carbon of the sugar moiety. Protein-bound erythrulosamine 3-phosphates and ribulosamine 3-phosphates are unstable and decompose under physiological conditions. This is Protein-ribulosamine 3-kinase, chloroplastic from Oryza sativa subsp. indica (Rice).